The sequence spans 550 residues: Membrane protein of ER body 2 (550 aa).

Residues 46–199 (EFRSKAAATA…SSDSEEKSNL (154 aa)) are disordered. Composition is skewed to low complexity over residues 80 to 105 (SVSE…SETG) and 112 to 121 (TGSNEENGNN). Polar residues predominate over residues 122–132 (WLESSSTNLPN). Residues 134 to 165 (ENKRQRNGEDCEIEEEEENNERSLSDSEEKSN) are a coiled coil. Residues 143-152 (DCEIEEEEEN) are compositionally biased toward acidic residues. 2 stretches are compositionally biased toward basic and acidic residues: residues 153 to 166 (NERS…KSNL) and 185 to 198 (KNER…EKSN). Helical transmembrane passes span 374-394 (STMN…IVLA), 425-445 (ILVA…VYAF), 458-478 (ISVF…KVYV), and 500-520 (SIVV…GEYI). The stretch at 393–418 (LAQNFQDLRNSSDQEKDRYEELLGRR) forms a coiled coil.

This sequence belongs to the CCC1 family. In terms of assembly, interacts directly or indirectly with NAI2.

The protein localises to the endoplasmic reticulum membrane. In terms of biological role, may sequester excess cytosolic iron and manganese into endoplasmic reticulum to reduce metal ion toxicity. Not essential for the accumulation of ER body components, including PYK10. In Arabidopsis thaliana (Mouse-ear cress), this protein is Membrane protein of ER body 2 (MEB2).